A 553-amino-acid polypeptide reads, in one-letter code: RNA N(6)-adenosine-methyltransferase METTL16 (553 aa).

The RNA-binding stretch occupies residues 17-20 (PPDF). Residues Arg-82, Gly-110, Ser-114, Glu-133, Thr-164, and Asn-184 each coordinate S-adenosyl-L-methionine. The interval 163 to 167 (KTLLM) is K-loop. RNA-binding regions lie at residues 199-211 (SRNSRRPPPSSVN), 250-254 (GKKCS), and 277-283 (QGRTMRW). A VCR 1 region spans residues 289–400 (FYDDVTVPSP…QLREVPRAPE (112 aa)). A phosphoserine mark is found at Ser-329, Ser-425, and Ser-429. The disordered stretch occupies residues 457 to 496 (EETPEATEDERDEERGGMEAMESCKGSSNGAQDGEASEKG). Residues 458 to 468 (ETPEATEDERD) show a composition bias toward acidic residues. Thr-463 is modified (phosphothreonine). The tract at residues 506-553 (YLFKCLVNIKKEAGDAVVEMHWVEGQNRDLMNQLCTYVRNQILRLVAS) is VCR 2.

This sequence belongs to the methyltransferase superfamily. METTL16/RlmF family. In terms of assembly, interacts with MEPCE. Interacts with LARP7.

Its subcellular location is the nucleus. It localises to the cytoplasm. It carries out the reaction adenosine in U6 snRNA + S-adenosyl-L-methionine = N(6)-methyladenosine in U6 snRNA + S-adenosyl-L-homocysteine + H(+). The enzyme catalyses an adenosine in mRNA + S-adenosyl-L-methionine = an N(6)-methyladenosine in mRNA + S-adenosyl-L-homocysteine + H(+). Methyltransferase activity is autoinhibited by the K-loop region that blocks S-adenosyl-L-methionine-binding. Upon activation, K-loop changes conformation, allowing S-adenosyl-L-methionine-binding and subsequent methyltransferase activity. mRNA N6-adenosine-methyltransferase activity is inhibited by zinc. Its function is as follows. RNA N6-methyltransferase that methylates adenosine residues at the N(6) position of a subset of RNAs and is involved in S-adenosyl-L-methionine homeostasis by regulating expression of MAT2A transcripts. Able to N6-methylate a subset of mRNAs and U6 small nuclear RNAs (U6 snRNAs). In contrast to the METTL3-METTL14 heterodimer, only able to methylate a limited number of RNAs: requires both a 5'UACAGAGAA-3' nonamer sequence and a specific RNA structure. Plays a key role in S-adenosyl-L-methionine homeostasis by mediating N6-methylation of MAT2A mRNAs, altering splicing of MAT2A transcripts: in presence of S-adenosyl-L-methionine, binds the 3'-UTR region of MAT2A mRNA and specifically N6-methylates the first hairpin of MAT2A mRNA, preventing recognition of their 3'-splice site by U2AF1/U2AF35, thereby inhibiting splicing and protein production of S-adenosylmethionine synthase. In S-adenosyl-L-methionine-limiting conditions, binds the 3'-UTR region of MAT2A mRNA but stalls due to the lack of a methyl donor, preventing N6-methylation and promoting expression of MAT2A. In addition to mRNAs, also able to mediate N6-methylation of U6 small nuclear RNA (U6 snRNA): specifically N6-methylates adenine in position 43 of U6 snRNAs. Also able to bind various lncRNAs, such as 7SK snRNA (7SK RNA) or 7SL RNA. Specifically binds the 3'-end of the MALAT1 long non-coding RNA. The protein is RNA N(6)-adenosine-methyltransferase METTL16 of Mus musculus (Mouse).